A 92-amino-acid polypeptide reads, in one-letter code: Small ribosomal subunit protein uS19 (92 aa).

This sequence belongs to the universal ribosomal protein uS19 family.

Functionally, protein S19 forms a complex with S13 that binds strongly to the 16S ribosomal RNA. The sequence is that of Small ribosomal subunit protein uS19 from Orientia tsutsugamushi (strain Boryong) (Rickettsia tsutsugamushi).